Consider the following 230-residue polypeptide: Acyl-protein thioesterase 1 (230 aa).

Active-site charge relay system residues include Ser119, Asp174, and His208. N6-acetyllysine is present on Lys224.

It belongs to the AB hydrolase superfamily. AB hydrolase 2 family. In terms of assembly, homodimer.

The protein localises to the cytoplasm. The protein resides in the cell membrane. Its subcellular location is the nucleus membrane. It localises to the endoplasmic reticulum. The enzyme catalyses S-hexadecanoyl-L-cysteinyl-[protein] + H2O = L-cysteinyl-[protein] + hexadecanoate + H(+). It carries out the reaction 1-hexadecanoyl-sn-glycero-3-phosphocholine + H2O = sn-glycerol 3-phosphocholine + hexadecanoate + H(+). The catalysed reaction is a 1-(9Z-octadecenoyl)-2-acyl-sn-glycero-3-phosphocholine + H2O = a 2-acyl-sn-glycero-3-phosphocholine + (9Z)-octadecenoate + H(+). In terms of biological role, acts as an acyl-protein thioesterase. Hydrolyzes fatty acids from S-acylated cysteine residues in proteins such as trimeric G alpha proteins or HRAS. Acts as a palmitoyl thioesterase that catalyzes depalmitoylation of proteins, such as ADRB2, KCNMA1 and SQSTM1. Acts as a negative regulator of autophagy by mediating palmitoylation of SQSTM1, decreasing affinity between SQSTM1 and ATG8 proteins and recruitment of ubiquitinated cargo proteins to autophagosomes. Acts as a lysophospholipase and hydrolyzes lysophosphatidylcholine (lyso-PC). Also hydrolyzes lysophosphatidylethanolamine (lyso-PE), lysophosphatidylinositol (lyso-PI) and lysophosphatidylserine (lyso-PS). Has much higher thioesterase activity than lysophospholipase activity. Contributes to the production of lysophosphatidic acid (LPA) during blood coagulation by recognizing and cleaving plasma phospholipids to generate lysophospholipids which in turn act as substrates for ENPP2 to produce LPA. This chain is Acyl-protein thioesterase 1 (Lypla1), found in Mus musculus (Mouse).